The sequence spans 87 residues: Cuticle protein 1 (87 aa).

Pyrrolidone carboxylic acid is present on Gln-1. A run of 3 repeats spans residues 5–20 (YPAG…YPNC), 43–58 (YPAG…YPFC), and 71–86 (YPAG…YPYC). Cystine bridges form between Cys-14-Cys-20, Cys-52-Cys-58, and Cys-80-Cys-86.

In Blaberus craniifer (Death's head cockroach), this protein is Cuticle protein 1.